A 340-amino-acid polypeptide reads, in one-letter code: PI-PLC X domain-containing protein 2 (340 aa).

In terms of domain architecture, PI-PLC X-box spans 42–215 (HLHNVPLSNL…KYQVLIFYHC (174 aa)). Catalysis depends on residues His-57 and His-132.

In terms of tissue distribution, expressed at highest levels in brain, followed by stomach and small intestine. Detected at low levels in kidney, ey, thymus and slkeletal muscle.

Its subcellular location is the nucleus. It carries out the reaction a 1,2-diacyl-sn-glycero-3-phospho-(1D-myo-inositol) + H2O = 1D-myo-inositol 1-phosphate + a 1,2-diacyl-sn-glycerol + H(+). Functionally, catalyzes the hydrolysis of inositol from phosphatidylinositol (1,2-diacyl-sn-glycero-3-phospho-(1D-myo-inositol), PI). Could also hydrolyze various multi-phosphorylated derivatives of PI, such as phosphatidylinositol-4,5 bisphosphate (PIP2), releasing inositol-1,4,5-trisphosphate (IP3) and the protein kinase C activator diacylglycerol (DAG), therefore mediating cell signaling. This chain is PI-PLC X domain-containing protein 2 (Plcxd2), found in Mus musculus (Mouse).